The chain runs to 227 residues: Ribonuclease 3 (227 aa).

The region spanning F4–N133 is the RNase III domain. E46 provides a ligand contact to Mg(2+). D50 is a catalytic residue. 2 residues coordinate Mg(2+): N119 and E122. E122 is an active-site residue. The DRBM domain occupies D158–N226.

Belongs to the ribonuclease III family. In terms of assembly, homodimer. Requires Mg(2+) as cofactor.

The protein resides in the cytoplasm. The enzyme catalyses Endonucleolytic cleavage to 5'-phosphomonoester.. Its function is as follows. Digests double-stranded RNA. Involved in the processing of primary rRNA transcript to yield the immediate precursors to the large and small rRNAs (23S and 16S). Processes some mRNAs, and tRNAs when they are encoded in the rRNA operon. Processes pre-crRNA and tracrRNA of type II CRISPR loci if present in the organism. This Rickettsia africae (strain ESF-5) protein is Ribonuclease 3.